Consider the following 185-residue polypeptide: Elongation factor P (185 aa).

Belongs to the elongation factor P family.

The protein localises to the cytoplasm. The protein operates within protein biosynthesis; polypeptide chain elongation. Its function is as follows. Involved in peptide bond synthesis. Stimulates efficient translation and peptide-bond synthesis on native or reconstituted 70S ribosomes in vitro. Probably functions indirectly by altering the affinity of the ribosome for aminoacyl-tRNA, thus increasing their reactivity as acceptors for peptidyl transferase. The protein is Elongation factor P of Caldicellulosiruptor bescii (strain ATCC BAA-1888 / DSM 6725 / KCTC 15123 / Z-1320) (Anaerocellum thermophilum).